Here is a 361-residue protein sequence, read N- to C-terminus: Chorismate synthase (361 aa).

Arginine 48 and arginine 54 together coordinate NADP(+). Residues 125–127, 238–239, glycine 278, 293–297, and arginine 319 contribute to the FMN site; these read RSS, NA, and KPTSS.

Belongs to the chorismate synthase family. In terms of assembly, homotetramer. FMNH2 serves as cofactor.

It carries out the reaction 5-O-(1-carboxyvinyl)-3-phosphoshikimate = chorismate + phosphate. It participates in metabolic intermediate biosynthesis; chorismate biosynthesis; chorismate from D-erythrose 4-phosphate and phosphoenolpyruvate: step 7/7. In terms of biological role, catalyzes the anti-1,4-elimination of the C-3 phosphate and the C-6 proR hydrogen from 5-enolpyruvylshikimate-3-phosphate (EPSP) to yield chorismate, which is the branch point compound that serves as the starting substrate for the three terminal pathways of aromatic amino acid biosynthesis. This reaction introduces a second double bond into the aromatic ring system. The protein is Chorismate synthase of Escherichia coli O7:K1 (strain IAI39 / ExPEC).